We begin with the raw amino-acid sequence, 235 residues long: Probable tetraspanin tspB (235 aa).

Over 1-23 the chain is Cytoplasmic; that stretch reads MVDTTNLIPNTPRYLKVPLIAFN. Residues 24–44 form a helical membrane-spanning segment; it reads TILWVLGLVLVIIGSIGVSFF. Residues 45-68 lie on the Extracellular side of the membrane; it reads SNFKDFTKVSKASAALSNLTTGAP. N-linked (GlcNAc...) asparagine glycosylation is present at N62. A helical transmembrane segment spans residues 69–89; it reads AGVLVIGIFFVILTVIGCFVA. Residues 90-93 are Cytoplasmic-facing; sequence GKEK. A helical transmembrane segment spans residues 94 to 114; sequence LVGLVIYTMLMLIILVALIGV. Topologically, residues 115–200 are extracellular; it reads GGKALTLHND…ISSNLYLVGA (86 aa). N-linked (GlcNAc...) asparagine glycans are attached at residues N143 and N159. A helical transmembrane segment spans residues 201-221; sequence AAVSIGVIEFICMLFALFLII. Residues 222–235 lie on the Cytoplasmic side of the membrane; it reads RICRAPRTKSYDYQ.

The protein belongs to the tetraspanin (TM4SF) family.

Its subcellular location is the membrane. This is Probable tetraspanin tspB (tspB) from Dictyostelium discoideum (Social amoeba).